Here is a 106-residue protein sequence, read N- to C-terminus: Valine dehydrogenase (106 aa).

Residue Lys91 is part of the active site.

Belongs to the Glu/Leu/Phe/Val dehydrogenases family. As to quaternary structure, homodimer.

It localises to the cytoplasm. The enzyme catalyses L-valine + NAD(+) + H2O = 3-methyl-2-oxobutanoate + NH4(+) + NADH + H(+). It functions in the pathway amino-acid degradation; L-valine degradation. Its function is as follows. Oxidative deamination of branched-chain amino acids. The catabolism of valine is the major source of fatty acid precursors for macrolide biosynthesis and a vital source of antibiotic precursors. The protein is Valine dehydrogenase (vdh) of Streptomyces ambofaciens.